The chain runs to 857 residues: Leucine--tRNA ligase (857 aa).

Residues 42 to 52 carry the 'HIGH' region motif; sequence PYPSGTLHMGH. The short motif at 616–620 is the 'KMSKS' region element; the sequence is KMSKS. Position 619 (K619) interacts with ATP.

This sequence belongs to the class-I aminoacyl-tRNA synthetase family.

The protein resides in the cytoplasm. The enzyme catalyses tRNA(Leu) + L-leucine + ATP = L-leucyl-tRNA(Leu) + AMP + diphosphate. This chain is Leucine--tRNA ligase, found in Parasynechococcus marenigrum (strain WH8102).